The chain runs to 311 residues: Malate dehydrogenase (311 aa).

Residues 7–13 (GAAGGIG) and Asp-34 each bind NAD(+). Residues Arg-81 and Arg-87 each contribute to the substrate site. NAD(+)-binding positions include Asn-94 and 117–119 (ITN). The substrate site is built by Asn-119 and Arg-153. His-177 acts as the Proton acceptor in catalysis. Met-227 contacts NAD(+).

This sequence belongs to the LDH/MDH superfamily. MDH type 1 family. Homodimer.

It carries out the reaction (S)-malate + NAD(+) = oxaloacetate + NADH + H(+). Catalyzes the reversible oxidation of malate to oxaloacetate. The protein is Malate dehydrogenase of Shewanella woodyi (strain ATCC 51908 / MS32).